The sequence spans 195 residues: Chromophore lyase CpcT/CpeT 2 (195 aa).

Belongs to the CpcT/CpeT biliprotein lyase family.

Functionally, covalently attaches a chromophore to Cys residue(s) of phycobiliproteins. This chain is Chromophore lyase CpcT/CpeT 2, found in Trichodesmium erythraeum (strain IMS101).